A 316-amino-acid chain; its full sequence is Taste receptor type 2 member 3 (316 aa).

Over 1-7 the chain is Extracellular; the sequence is MLGFTEG. A helical membrane pass occupies residues 8-28; sequence IFLVLTVTEFILGNLVNGFIV. The Cytoplasmic portion of the chain corresponds to 29 to 50; sequence SVNGSHWFKSKKISLSDFIITS. The chain crosses the membrane as a helical span at residues 51-71; the sequence is LALFRIFLLWIIFTDSLIIVF. At 72 to 86 the chain is on the extracellular side; the sequence is SYHTHDSGIRMQLID. The helical transmembrane segment at 87–107 threads the bilayer; the sequence is VFWTFTNHFSIWLISCLSVFY. Over 108–128 the chain is Cytoplasmic; sequence CLKIATFSHPSFLWLKWRASR. A helical membrane pass occupies residues 129–149; the sequence is VVVGMLWGALVLSCVCTMSLM. At 150 to 186 the chain is on the extracellular side; it reads NEFKIYSALTGSRDTQNMTEYIRLKRHEYNLMHVLGN. Asn-166 carries an N-linked (GlcNAc...) asparagine glycan. Residues 187–207 form a helical membrane-spanning segment; that stretch reads LWKIPSLIVSLIAYFLLLLSL. Residues 208-234 lie on the Cytoplasmic side of the membrane; sequence GKHTQQMQKYSVGSRDQSAEAHRRAMR. Residues 235–255 form a helical membrane-spanning segment; sequence IILSFLLFFLFYFLSFVILSS. The Extracellular portion of the chain corresponds to 256–266; it reads SRFLPETKIAR. Residues 267 to 287 traverse the membrane as a helical segment; the sequence is IIGVVITMSYLVGDSLILILG. Residues 288 to 316 lie on the Cytoplasmic side of the membrane; it reads NNKLKQTFVAILPCECGHPKPGSKRFFAS.

This sequence belongs to the G-protein coupled receptor T2R family.

It localises to the membrane. Gustducin-coupled receptor implicated in the perception of bitter compounds in the oral cavity and the gastrointestinal tract. Signals through PLCB2 and the calcium-regulated cation channel TRPM5. The chain is Taste receptor type 2 member 3 from Rattus norvegicus (Rat).